Here is a 334-residue protein sequence, read N- to C-terminus: DNA-directed RNA polymerase subunit alpha (334 aa).

The segment at 1–234 is alpha N-terminal domain (alpha-NTD); sequence MQRSLNEFLT…QQLAVFVDFD (234 aa). Residues 248 to 334 form an alpha C-terminal domain (alpha-CTD) region; that stretch reads IDPILLRPVD…IRGDDRVLGG (87 aa).

Belongs to the RNA polymerase alpha chain family. In terms of assembly, homodimer. The RNAP catalytic core consists of 2 alpha, 1 beta, 1 beta' and 1 omega subunit. When a sigma factor is associated with the core the holoenzyme is formed, which can initiate transcription.

It carries out the reaction RNA(n) + a ribonucleoside 5'-triphosphate = RNA(n+1) + diphosphate. Its function is as follows. DNA-dependent RNA polymerase catalyzes the transcription of DNA into RNA using the four ribonucleoside triphosphates as substrates. This is DNA-directed RNA polymerase subunit alpha from Hahella chejuensis (strain KCTC 2396).